Consider the following 416-residue polypeptide: E3 ubiquitin-protein ligase makorin-2 (416 aa).

2 C3H1-type zinc fingers span residues 2 to 29 (STKQ…HDLA) and 31 to 58 (SKPS…HTRP). Positions 113–122 (NLSGMAERKT) are enriched in basic and acidic residues. Residues 113-142 (NLSGMAERKTQPSMVSNPGSCSDPQPSPEM) are disordered. Over residues 123–136 (QPSMVSNPGSCSDP) the composition is skewed to polar residues. Residue Ser-139 is modified to Phosphoserine. The segment at 165–192 (SNEQQLCPYAAAGECRFGDACVYLHGEV) adopts a C3H1-type 3 zinc-finger fold. A makorin-type Cys-His region spans residues 193–222 (CEICRLQVLHPFDPEQRKAHEKICMLTFEH). The RING-type zinc-finger motif lies at 238–292 (CSICMEVILEKASASERRFGILSNCNHTYCLSCIRQWRCAKQFENPIIKSCPECR). The segment at 321–350 (GMGKKACKYFEQGKGTCPFGSKCLYRHAYP) adopts a C3H1-type 4 zinc-finger fold.

Interacts with PDLIM2 (via LIM zinc-binding domain). Interacts with RELA. As to expression, expressed in sperm, with significantly reduced expression in sperm of patients with oligoasthenoteratozoospermia (at protein level). Widely expressed with expression in testis, ovary, small intestine, colon, peripheral blood leukocytes, fetal liver, bone marrow, thymus, lymph node and spleen.

The protein resides in the cytoplasm. Its subcellular location is the nucleus. The enzyme catalyses S-ubiquitinyl-[E2 ubiquitin-conjugating enzyme]-L-cysteine + [acceptor protein]-L-lysine = [E2 ubiquitin-conjugating enzyme]-L-cysteine + N(6)-ubiquitinyl-[acceptor protein]-L-lysine.. Its pathway is protein modification; protein ubiquitination. Functionally, E3 ubiquitin ligase catalyzing the covalent attachment of ubiquitin moieties onto substrate proteins. Promotes the polyubiquitination and proteasome-dependent degradation of RELA/p65, thereby suppressing RELA-mediated NF-kappaB transactivation and negatively regulating inflammatory responses. Plays a role in the regulation of spermiation and in male fertility. The sequence is that of E3 ubiquitin-protein ligase makorin-2 (MKRN2) from Homo sapiens (Human).